Here is a 96-residue protein sequence, read N- to C-terminus: UPF0251 protein Shal_3723 (96 aa).

This sequence belongs to the UPF0251 family.

This is UPF0251 protein Shal_3723 from Shewanella halifaxensis (strain HAW-EB4).